Here is a 302-residue protein sequence, read N- to C-terminus: Phosphoribosylaminoimidazole-succinocarboxamide synthase (302 aa).

Belongs to the SAICAR synthetase family.

The catalysed reaction is 5-amino-1-(5-phospho-D-ribosyl)imidazole-4-carboxylate + L-aspartate + ATP = (2S)-2-[5-amino-1-(5-phospho-beta-D-ribosyl)imidazole-4-carboxamido]succinate + ADP + phosphate + 2 H(+). It functions in the pathway purine metabolism; IMP biosynthesis via de novo pathway; 5-amino-1-(5-phospho-D-ribosyl)imidazole-4-carboxamide from 5-amino-1-(5-phospho-D-ribosyl)imidazole-4-carboxylate: step 1/2. The polypeptide is Phosphoribosylaminoimidazole-succinocarboxamide synthase (Polaromonas sp. (strain JS666 / ATCC BAA-500)).